The primary structure comprises 342 residues: Inactive chitinase-like protein 2 (342 aa).

A signal peptide spans Met1–Ala19. Residues Glu20–Gly60 enclose the Chitin-binding type-1 domain. Cystine bridges form between Cys22–Cys37, Cys31–Cys43, Cys36–Cys80, Cys84–Cys88, Cys122–Cys184, Cys196–Cys204, and Cys301–Cys333.

Belongs to the glycosyl hydrolase 19 family. Chitinase class I subfamily.

Functionally, inactive chitinase-like protein that does not exhibit hydrolytic activity toward chitin. Binds strongly to chitin and possesses antifungal activity toward the fungal pathogen Altenaria alternata in plate assays. Probably involved in defense against fungal pathogens through a mechanism that only involves carbohydrate binding. The polypeptide is Inactive chitinase-like protein 2 (Hevea brasiliensis (Para rubber tree)).